A 191-amino-acid polypeptide reads, in one-letter code: uncharacterized protein (191 aa).

To E.coli YecM.

This is an uncharacterized protein from Haemophilus influenzae (strain ATCC 51907 / DSM 11121 / KW20 / Rd).